Here is an 85-residue protein sequence, read N- to C-terminus: Follicular dendritic cell secreted peptide (85 aa).

The N-terminal stretch at methionine 1–glycine 17 is a signal peptide. The interval serine 75–serine 83 is O-glycosylated at one site.

Post-translationally, O-glycosylated with core 1 or possibly core 8 glycans. Abundantly expressed in tonsil, lymph node, and trachea; strong expression in prostate; lower expression in thyroid, stomach, and colon.

It localises to the secreted. Can bind to the surface of B-lymphoma cells, but not T-lymphoma cells, consistent with a function as a secreted mediator acting upon B-cells. In Homo sapiens (Human), this protein is Follicular dendritic cell secreted peptide (FDCSP).